Here is a 487-residue protein sequence, read N- to C-terminus: Steroid 21-hydroxylase (487 aa).

Positions 92 and 117 each coordinate heme b. Arg228 provides a ligand contact to 17alpha-hydroxyprogesterone. A progesterone-binding site is contributed by Arg228. His357, Arg418, and Cys420 together coordinate heme b.

The protein belongs to the cytochrome P450 family. Heme b is required as a cofactor.

Its subcellular location is the endoplasmic reticulum membrane. It is found in the microsome membrane. It carries out the reaction progesterone + reduced [NADPH--hemoprotein reductase] + O2 = 21-hydroxyprogesterone + oxidized [NADPH--hemoprotein reductase] + H2O + H(+). It catalyses the reaction 17alpha-hydroxyprogesterone + reduced [NADPH--hemoprotein reductase] + O2 = 11-deoxycortisol + oxidized [NADPH--hemoprotein reductase] + H2O + H(+). Functionally, a cytochrome P450 monooxygenase that plays a major role in adrenal steroidogenesis. Catalyzes the hydroxylation at C-21 of progesterone and 17alpha-hydroxyprogesterone to respectively form 11-deoxycorticosterone and 11-deoxycortisol, intermediate metabolites in the biosynthetic pathway of mineralocorticoids and glucocorticoids. Mechanistically, uses molecular oxygen inserting one oxygen atom into a substrate, and reducing the second into a water molecule, with two electrons provided by NADPH via cytochrome P450 reductase (CPR; NADPH-ferrihemoprotein reductase). This Mus musculus (Mouse) protein is Steroid 21-hydroxylase (Cyp21).